A 221-amino-acid polypeptide reads, in one-letter code: Uracil-DNA glycosylase 1 (221 aa).

Catalysis depends on Asp-61, which acts as the Proton acceptor.

It belongs to the uracil-DNA glycosylase (UDG) superfamily. UNG family.

The protein resides in the cytoplasm. The catalysed reaction is Hydrolyzes single-stranded DNA or mismatched double-stranded DNA and polynucleotides, releasing free uracil.. Excises uracil residues from the DNA which can arise as a result of misincorporation of dUMP residues by DNA polymerase or due to deamination of cytosine. The protein is Uracil-DNA glycosylase 1 of Listeria monocytogenes serovar 1/2a (strain ATCC BAA-679 / EGD-e).